Here is a 78-residue protein sequence, read N- to C-terminus: Polcalcin Phl p 7 (78 aa).

EF-hand domains lie at 1–35 (MADD…LGST) and 35–70 (TSAD…NPGL). Ca(2+) is bound by residues aspartate 13, asparagine 15, aspartate 17, lysine 19, glutamate 24, aspartate 48, aspartate 50, aspartate 52, and glutamate 59.

As to quaternary structure, monomer. Specifically expressed in pollen.

In terms of biological role, may be involved in the regulation of pollen-tube growth. In Phleum pratense (Common timothy), this protein is Polcalcin Phl p 7.